We begin with the raw amino-acid sequence, 271 residues long: Formamidopyrimidine-DNA glycosylase (271 aa).

P2 functions as the Schiff-base intermediate with DNA in the catalytic mechanism. The active-site Proton donor is E3. Catalysis depends on K58, which acts as the Proton donor; for beta-elimination activity. Residues H92, R111, and R152 each contribute to the DNA site. The FPG-type zinc-finger motif lies at 237–271 (MVYGREGQACKHCGRELKHATIGQRATVWCAACQR). Catalysis depends on R261, which acts as the Proton donor; for delta-elimination activity.

The protein belongs to the FPG family. In terms of assembly, monomer. Zn(2+) serves as cofactor.

The enzyme catalyses Hydrolysis of DNA containing ring-opened 7-methylguanine residues, releasing 2,6-diamino-4-hydroxy-5-(N-methyl)formamidopyrimidine.. The catalysed reaction is 2'-deoxyribonucleotide-(2'-deoxyribose 5'-phosphate)-2'-deoxyribonucleotide-DNA = a 3'-end 2'-deoxyribonucleotide-(2,3-dehydro-2,3-deoxyribose 5'-phosphate)-DNA + a 5'-end 5'-phospho-2'-deoxyribonucleoside-DNA + H(+). Involved in base excision repair of DNA damaged by oxidation or by mutagenic agents. Acts as a DNA glycosylase that recognizes and removes damaged bases. Has a preference for oxidized purines, such as 7,8-dihydro-8-oxoguanine (8-oxoG). Has AP (apurinic/apyrimidinic) lyase activity and introduces nicks in the DNA strand. Cleaves the DNA backbone by beta-delta elimination to generate a single-strand break at the site of the removed base with both 3'- and 5'-phosphates. The sequence is that of Formamidopyrimidine-DNA glycosylase from Xanthomonas campestris pv. campestris (strain B100).